Consider the following 160-residue polypeptide: Cytochrome b6-f complex subunit 4 (160 aa).

3 helical membrane passes run 36–56 (LLYI…GLAV), 95–115 (LLGV…PFLE), and 131–151 (TVFL…TLPI).

Belongs to the cytochrome b family. PetD subfamily. The 4 large subunits of the cytochrome b6-f complex are cytochrome b6, subunit IV (17 kDa polypeptide, petD), cytochrome f and the Rieske protein, while the 4 small subunits are petG, petL, petM and petN. The complex functions as a dimer.

The protein resides in the plastid. Its subcellular location is the chloroplast thylakoid membrane. In terms of biological role, component of the cytochrome b6-f complex, which mediates electron transfer between photosystem II (PSII) and photosystem I (PSI), cyclic electron flow around PSI, and state transitions. The sequence is that of Cytochrome b6-f complex subunit 4 from Saccharum hybrid (Sugarcane).